The following is a 386-amino-acid chain: Diels-Alderase phm7 (386 aa).

Positions 1 to 223 (MSEPTSSSSL…MVRGWSARPW (223 aa)) are beta-sandwich motif. Substrate contacts are provided by glutamate 51, asparagine 84, and lysine 356. Residues 223–386 (WPTFMNDAYY…FGGQLQIPVP (164 aa)) are beta-barrel motif.

It belongs to the Diels-Alderase family.

It participates in secondary metabolite biosynthesis. 3-aminomethyl-p-menthane which is similar to the phomasetin substructure, dose-dependently inhibits phm7 activity in vitro and production of phomasetin in the fungus. Diels-Alderase; part of the gene cluster that mediates the biosynthesis of the trans-fused decalin-containing tetramic acid phomasetin, the stereochemical opposite of the HIV-1 integrase inhibitor equisetin. The PKS module of phm1 together with the enoylreductase phm4 catalyze the formation of the polyketide unit which is then conjugated to L-serine by the condensation domain of the phm1 NRPS module. Activity of the Dieckmann cyclase domain (RED) of phm1 results in release of the Dieckmann product intermediate. The Diels-Alderase phm7 then uses the Dieckmann product of phm1 as substrate and catalyzes the Diels-Alder cycloaddition to form the decalin ring of N-desmethylphomasetin. N-desmethylphomasetin is further methylated to phomasetin by the methyltransferase phm5. The sequence is that of Diels-Alderase phm7 from Pyrenochaetopsis sp.